Reading from the N-terminus, the 1605-residue chain is Kinesin-like protein klp-12 (1605 aa).

The 354-residue stretch at 5–358 (CVQVALRIRP…MKYANRAKEI (354 aa)) folds into the Kinesin motor domain. Position 84–91 (84–91 (GQTGSGKT)) interacts with ATP. Threonine 91 and serine 217 together coordinate Mg(2+). Disordered regions lie at residues 548 to 596 (GENV…EESE), 1085 to 1152 (VSDA…SNNN), and 1198 to 1232 (SRSNLMSSSSSTTTTTLSSSNLLNPRGTTSSSSSK). Residues 550–559 (NVSSEYSSMA) show a composition bias toward polar residues. The span at 560 to 596 (QDEDGTSNEAEELLDEEDLDEDEDETAEEKQEQEESE) shows a compositional bias: acidic residues. The stretch at 575-730 (EEDLDEDEDE…KKAKVELIKK (156 aa)) forms a coiled coil. Residues 1116-1152 (VSTSPASTSFANSTSQSPSFSRNTRFRSTVGGVSNNN) show a composition bias toward polar residues. A compositionally biased stretch (low complexity) spans 1200–1232 (SNLMSSSSSTTTTTLSSSNLLNPRGTTSSSSSK). WD repeat units follow at residues 1282 to 1319 (GHARGVLSVDVNEKLMVTGSKDRTAKLWDIEACREIRT), 1389 to 1427 (FLETLITAADVDPTGQLLFTSFSAYVRVWNLREWKPLGR), 1525 to 1566 (AHQQ…RMKL), and 1573 to 1605 (AHQEGINDMCSTKSMLFTASGDSTVGFWKSNAV).

Belongs to the TRAFAC class myosin-kinesin ATPase superfamily. Kinesin family. As to quaternary structure, component of a complex at least composed of alpha tubulin and beta tubulin. Within the complex, interacts with the alpha tubulin and beta tubulin dimer.

Its subcellular location is the cytoplasm. The protein localises to the cytoskeleton. In terms of biological role, microtubule-binding motor protein which has ATPase activity. In complex with alpha and beta tubulins, preferentially binds to the growing microtubule plus-end to stabilize it and detaches following ATP hydrolysis. Negatively regulates axonal length through inhibiting microtubule polymerization at its plus-end. The polypeptide is Kinesin-like protein klp-12 (Caenorhabditis elegans).